Here is a 146-residue protein sequence, read N- to C-terminus: uncharacterized protein (146 aa).

This is an uncharacterized protein from Haemophilus influenzae (strain ATCC 51907 / DSM 11121 / KW20 / Rd).